The chain runs to 171 residues: Antimicrobial protein CAP18 (171 aa).

The first 29 residues, 1 to 29, serve as a signal peptide directing secretion; it reads METHKHGPSLAWWSLLLLLLGLLMPPAIA. 2 cysteine pairs are disulfide-bonded: cysteine 85–cysteine 96 and cysteine 107–cysteine 124.

The protein belongs to the cathelicidin family. As to expression, neutrophils.

It is found in the secreted. In terms of biological role, CAP18 binds to the lipid A moiety of bacterial lipopolysaccharides (LPS), a glycolipid present in the outer membrane of all Gram-negative bacteria. Has antibiotic activity. The polypeptide is Antimicrobial protein CAP18 (CAP18) (Oryctolagus cuniculus (Rabbit)).